The chain runs to 1519 residues: Putative lipoprotein YghJ (1519 aa).

An N-terminal signal peptide occupies residues 1-23 (MNKKFKYKKSLLAAILSATLLAG). 2 disordered regions span residues 22 to 107 (AGCD…GATC) and 226 to 247 (NAAT…TTPG). A lipid anchor (N-palmitoyl cysteine) is attached at Cys24. Cys24 is lipidated: S-diacylglycerol cysteine. The span at 31 to 42 (SSSDTPPVDSGT) shows a compositional bias: low complexity. The segment covering 51–77 (DPTPNPEPTPEPTPDPEPTPEPIPDPE) has biased composition (pro residues). The span at 97 to 107 (GGSQRVTGATC) shows a compositional bias: polar residues. The segment covering 234 to 247 (STHTSPVVPVTTPG) has biased composition (low complexity). Residues 1080–1380 (GNMQSTGLWA…MYAQLKEWAE (301 aa)) form the Peptidase M60 domain. A disordered region spans residues 1497–1519 (DLPKPEQGPETINQVTEHKMSAE).

This sequence to V.cholerae AcfD (VC_0845).

The protein localises to the cell membrane. In terms of biological role, may be a substrate of the type II secretion system beta (T2SS-beta). This chain is Putative lipoprotein YghJ (yghJ), found in Escherichia coli O78:H11 (strain H10407 / ETEC).